Consider the following 538-residue polypeptide: Probable bifunctional tRNA threonylcarbamoyladenosine biosynthesis protein (538 aa).

The segment at 1-327 is kae1; the sequence is MIVLICLGIE…FRTDEVEAPW (327 aa). 3 residues coordinate Fe cation: histidine 111, histidine 115, and tyrosine 132. L-threonylcarbamoyladenylate contacts are provided by residues 132–136, aspartate 164, glycine 177, glutamate 181, and asparagine 260; that span reads YVSGG. Residue aspartate 288 coordinates Fe cation. The region spanning 336–538 is the Protein kinase domain; sequence KLPDNLIAKG…EIESRGRYTH (203 aa). ATP is bound by residues 342 to 350 and lysine 363; that span reads IAKGAESDI. The Proton acceptor; for kinase activity role is filled by aspartate 452.

This sequence in the N-terminal section; belongs to the KAE1 / TsaD family. It in the C-terminal section; belongs to the protein kinase superfamily. Tyr protein kinase family. BUD32 subfamily. In terms of assembly, component of the KEOPS complex that consists of Kae1, Bud32, Cgi121 and Pcc1; the whole complex dimerizes. Requires Fe(2+) as cofactor.

The protein localises to the cytoplasm. It catalyses the reaction L-seryl-[protein] + ATP = O-phospho-L-seryl-[protein] + ADP + H(+). It carries out the reaction L-threonyl-[protein] + ATP = O-phospho-L-threonyl-[protein] + ADP + H(+). The catalysed reaction is L-threonylcarbamoyladenylate + adenosine(37) in tRNA = N(6)-L-threonylcarbamoyladenosine(37) in tRNA + AMP + H(+). In terms of biological role, required for the formation of a threonylcarbamoyl group on adenosine at position 37 (t(6)A37) in tRNAs that read codons beginning with adenine. Is a component of the KEOPS complex that is probably involved in the transfer of the threonylcarbamoyl moiety of threonylcarbamoyl-AMP (TC-AMP) to the N6 group of A37. The Kae1 domain likely plays a direct catalytic role in this reaction. The Bud32 domain probably displays kinase activity that regulates Kae1 function. This is Probable bifunctional tRNA threonylcarbamoyladenosine biosynthesis protein from Methanobrevibacter smithii (strain ATCC 35061 / DSM 861 / OCM 144 / PS).